The primary structure comprises 266 residues: N-formylglutamate deformylase (266 aa).

It belongs to the N-formylglutamate deformylase family. Monomer.

The catalysed reaction is N-formyl-L-glutamate + H2O = formate + L-glutamate. It participates in amino-acid degradation; L-histidine degradation into L-glutamate; L-glutamate from N-formimidoyl-L-glutamate (deiminase route): step 2/2. Functionally, catalyzes the hydrolysis of N-formyl-L-glutamate to formate and L-glutamate. Shows weak activity with N-formyl-L-glutamine. The chain is N-formylglutamate deformylase from Pseudomonas aeruginosa (strain ATCC 15692 / DSM 22644 / CIP 104116 / JCM 14847 / LMG 12228 / 1C / PRS 101 / PAO1).